A 551-amino-acid chain; its full sequence is MTRYLFITGGVVSSLGKGISAASLGTILQARGLSVTLIKLDPYINVDPGTMSPFQHGEVYVTDDGAETDLDLGHYERFVRAPVSRRNNFTTGRIYESVIRKERRGDYLGGTVQVIPHVTDEIKRCIQEGADDVDVALVEIGGTVGDIESLPFLEAIRQMGTELGRERCMFMHLTLVPFIGTAGEMKTKPTQHSVKELRSIGIQPDILVCRAAHPIPEEERRKIALFTNVEPRAVIAALDVPNIYQIPEELHQQGLDHIVAEKWGLELPPANLADWHRVVEIMSNPEGEVTVAMVGKYVDLTDAYMSLNEALRHAGIQTRQRVNIRYVDSESLEREGCSALEGADAILVPGGFGQRGIEGKIEAVRFARESRIPYLGICLGMQLAVIEYARHQAGLENAHSTEFVRHPHHPVIGLITEWMTDEGEVEQRDEADDLGGTMRLGGQPCRLAAGTLINQVYGKDRIVERHRHRYEFNNHYRERLAEAGLSFSGWSQDGRLVEVVELPEHPWFIGCQFHPEFTSTPRDGHPLFASFLRAAIAHRDGTAQAFNHEQH.

The tract at residues 1-265 is amidoligase domain; that stretch reads MTRYLFITGG…DHIVAEKWGL (265 aa). Serine 13 is a binding site for CTP. Serine 13 provides a ligand contact to UTP. ATP is bound by residues 14-19 and aspartate 71; that span reads SLGKGI. The Mg(2+) site is built by aspartate 71 and glutamate 139. CTP contacts are provided by residues 146–148, 186–191, and lysine 222; these read DIE and KTKPTQ. UTP is bound by residues 186–191 and lysine 222; that span reads KTKPTQ. A Glutamine amidotransferase type-1 domain is found at 290-541; the sequence is TVAMVGKYVD…LRAAIAHRDG (252 aa). Glycine 351 serves as a coordination point for L-glutamine. The active-site Nucleophile; for glutamine hydrolysis is the cysteine 378. L-glutamine is bound by residues 379–382, glutamate 402, and arginine 469; that span reads LGMQ. Active-site residues include histidine 514 and glutamate 516.

Belongs to the CTP synthase family. As to quaternary structure, homotetramer.

It catalyses the reaction UTP + L-glutamine + ATP + H2O = CTP + L-glutamate + ADP + phosphate + 2 H(+). The enzyme catalyses L-glutamine + H2O = L-glutamate + NH4(+). The catalysed reaction is UTP + NH4(+) + ATP = CTP + ADP + phosphate + 2 H(+). The protein operates within pyrimidine metabolism; CTP biosynthesis via de novo pathway; CTP from UDP: step 2/2. With respect to regulation, allosterically activated by GTP, when glutamine is the substrate; GTP has no effect on the reaction when ammonia is the substrate. The allosteric effector GTP functions by stabilizing the protein conformation that binds the tetrahedral intermediate(s) formed during glutamine hydrolysis. Inhibited by the product CTP, via allosteric rather than competitive inhibition. Catalyzes the ATP-dependent amination of UTP to CTP with either L-glutamine or ammonia as the source of nitrogen. Regulates intracellular CTP levels through interactions with the four ribonucleotide triphosphates. The sequence is that of CTP synthase from Halorhodospira halophila (strain DSM 244 / SL1) (Ectothiorhodospira halophila (strain DSM 244 / SL1)).